A 207-amino-acid polypeptide reads, in one-letter code: Small ribosomal subunit protein uS4c (207 aa).

Residues 92–153 (MRLDNILFRL…PKTYQSILSK (62 aa)) enclose the S4 RNA-binding domain.

It belongs to the universal ribosomal protein uS4 family. Part of the 30S ribosomal subunit. Contacts protein S5. The interaction surface between S4 and S5 is involved in control of translational fidelity.

Its subcellular location is the plastid. It localises to the chloroplast. Its function is as follows. One of the primary rRNA binding proteins, it binds directly to 16S rRNA where it nucleates assembly of the body of the 30S subunit. Functionally, with S5 and S12 plays an important role in translational accuracy. The sequence is that of Small ribosomal subunit protein uS4c (rps4) from Equisetum hyemale (Dutch rush).